Consider the following 356-residue polypeptide: Protein disulfide isomerase crld-1 (356 aa).

The first 17 residues, 1–17, serve as a signal peptide directing secretion; it reads MSRILLLLAVLIGATSQ. Over 18–299 the chain is Lumenal; it reads KEVTIKNEKC…DRPFMPIDQQ (282 aa). Positions 27–30 match the CXXC motif; that stretch reads CRTC. Cys27 and Cys30 are disulfide-bonded. A glycan (N-linked (GlcNAc...) asparagine) is linked at Asn122. The region spanning 150–188 is the EGF-like 1 domain; the sequence is GLSEKADVCFGKGSCHGDGSREGSGKCKCETGYTGNLCR. Disulfide bonds link Cys158–Cys176, Cys178–Cys187, Cys245–Cys258, Cys251–Cys267, and Cys269–Cys281. Positions 241–282 constitute an EGF-like 2; calcium-binding domain; that stretch reads DVNECQNESACTKEHEICVNTVGSFKCECKEGYKKDDEQNCQ. N-linked (GlcNAc...) asparagine glycosylation is present at Asn247. Residues 300–317 form a helical membrane-spanning segment; sequence LKLIAFSSLIIIITFVVW. Residues 318-321 lie on the Cytoplasmic side of the membrane; that stretch reads HGSP. Residues 322–341 form a helical membrane-spanning segment; the sequence is VLYVLTGITIVALILVDLYV. Residues 342-356 lie on the Lumenal side of the membrane; that stretch reads NPDTIPDEAKRFLGY.

Belongs to the CRELD family. As to quaternary structure, interacts with unc-29. In terms of tissue distribution, isoforms a: Widely expressed in tissues including body wall muscles, neurons, pharynx, hypodermis, seam cells, intestine and gonad. Isoform b: Widely expressed in tissues including body wall muscles, neurons, pharynx, hypodermis, seam cells, intestine and gonad.

The protein localises to the endoplasmic reticulum membrane. It localises to the endoplasmic reticulum lumen. The enzyme catalyses Catalyzes the rearrangement of -S-S- bonds in proteins.. Its function is as follows. Protein disulfide isomerase which associates with the unc-29 subunit of levamisole-sensitive nicotinic acetylcholine receptors (L-nAChR) to promote L-nAChR assembly in the endoplasmic reticulum at neuromuscular junctions. In terms of biological role, promotes L-nAChR assembly in the endoplasmic reticulum at neuromuscular junctions. This is Protein disulfide isomerase crld-1 from Caenorhabditis elegans.